The following is a 227-amino-acid chain: Gamma-glutamyl-hercynylcysteine sulfoxide hydrolase (227 aa).

The active-site Nucleophile is the Cys-2. The Glutamine amidotransferase type-2 domain occupies 2 to 227; that stretch reads CRHVAWLGAP…RDAHVVVTPL (226 aa).

The enzyme catalyses gamma-L-glutamyl-hercynylcysteine S-oxide + H2O = S-(hercyn-2-yl)-L-cysteine S-oxide + L-glutamate. It functions in the pathway amino-acid biosynthesis; ergothioneine biosynthesis. In terms of biological role, catalyzes the hydrolysis of the gamma-glutamyl amide bond of hercynyl-gamma-L-glutamyl-L-cysteine sulfoxide to produce hercynylcysteine sulfoxide, a step in the biosynthesis pathway of ergothioneine. The protein is Gamma-glutamyl-hercynylcysteine sulfoxide hydrolase of Mycolicibacterium smegmatis (strain ATCC 700084 / mc(2)155) (Mycobacterium smegmatis).